Reading from the N-terminus, the 415-residue chain is Putative ankyrin repeat protein FPV034 (415 aa).

ANK repeat units follow at residues 12-41 (ICIK…NINT), 43-72 (KHFN…NINI), 76-105 (VGYT…IINK), 107-135 (DYRL…NINV), 139-168 (KGYT…DISI), 170-200 (NKYS…DVNI), 203-232 (HVKA…DVNI), 237-266 (GGRT…NVDS), 270-299 (VGNT…DINV), and 303-332 (FGET…SLKV).

The polypeptide is Putative ankyrin repeat protein FPV034 (ANK2) (Fowlpox virus (strain NVSL) (FPV)).